Consider the following 87-residue polypeptide: Omega-lycotoxin-Am1c (87 aa).

Positions 1–17 (MKLSIFFVLFFIAIAYC) are cleaved as a signal peptide. The propeptide occupies 18 to 40 (QPEFLDDEEDEVEETLPVAEEGR). 4 disulfide bridges follow: cysteine 44-cysteine 59, cysteine 51-cysteine 64, cysteine 58-cysteine 84, and cysteine 66-cysteine 82.

Belongs to the neurotoxin omega-lctx family. In terms of tissue distribution, expressed by the venom gland.

The protein resides in the secreted. Modulates Cav2.1/CACNA1A voltage-gated calcium channels (P/Q-type currents) in rat cerebellar Purkinje cells and hippocampal CA1-CA3 neurons. At saturating concentrations (&gt;10 nM) decelerates activation kinetics and slightly increases peak amplitude without affecting deactivation kinetics. In vivo, does not cause death when intravenously injected into mice. In rat models, through its activity on Cav2.1/CACNA1A, has an ameliorative effect on memory defects provoked by hyperstimulation of N-methyl-D-aspartate receptors (NMDARs) in the hippocampus. The sequence is that of Omega-lycotoxin-Am1c from Alopecosa marikovskyi (Wolf spider).